The following is a 477-amino-acid chain: GTPase Der (477 aa).

EngA-type G domains are found at residues 3–167 and 206–382; these read LTIA…GKER and LRIA…RMWN. GTP is bound by residues 9–16, 56–60, 119–122, 212–219, 259–263, and 324–327; these read GRPNVGKS, DTAGL, NKSE, GRPNTGKS, and NKWD. The KH-like domain occupies 383–467; sequence RRISTAKLNR…PIRISLRASD (85 aa).

It belongs to the TRAFAC class TrmE-Era-EngA-EngB-Septin-like GTPase superfamily. EngA (Der) GTPase family. In terms of assembly, associates with the 50S ribosomal subunit.

Its function is as follows. GTPase that plays an essential role in the late steps of ribosome biogenesis. The chain is GTPase Der from Bartonella quintana (strain Toulouse) (Rochalimaea quintana).